Consider the following 361-residue polypeptide: S-adenosylmethionine-dependent nucleotide dehydratase RSAD2 (361 aa).

In terms of domain architecture, Radical SAM core spans 69-289 (PTTPTSVNYH…LERHKEVSCL (221 aa)). C83, C87, and C90 together coordinate [4Fe-4S] cluster. K197 is subject to N6-acetyllysine. K206 participates in a covalent cross-link: Glycyl lysine isopeptide (Lys-Gly) (interchain with G-Cter in ubiquitin).

The protein belongs to the radical SAM superfamily. RSAD2 family. In terms of assembly, homodimer. Interacts with IRAK1 and TRAF6. Interacts with FPPS. Interacts with HADHB. Interacts (via C-terminus) with VAPA/VAP33 (via C-terminus). As to quaternary structure, (Microbial infection) Interacts with human cytomegalovirus/HHV-5 protein vMIA/UL37; this interaction results in RSAD2/viperin relocalization from the endoplasmic reticulum to the mitochondria. (Microbial infection) Interacts (via N-terminus) with enterovirus A71 protein 2C; this interaction inhibits viral replication. In terms of assembly, (Microbial infection) Interacts with herpes simplex virus 1/HHV-1 glycoprotein D; this interaction inhibits HHV-1 replication by facilitating IRF7-mediated IFN-beta production. Requires [4Fe-4S] cluster as cofactor. Post-translationally, acetylated by HAT1. HAT1-mediated acetylation of Lys-197 in turn recruits UBE4A that stimulates RSAD2 polyubiquitination leading to proteasomal degradation. In terms of processing, 'Lys-6'-linked polyubiquitination at Lys-206 leads to RSAD2 protein degradation.

It localises to the endoplasmic reticulum membrane. It is found in the golgi apparatus. Its subcellular location is the endoplasmic reticulum. The protein resides in the lipid droplet. The protein localises to the mitochondrion. It localises to the mitochondrion inner membrane. It is found in the mitochondrion outer membrane. It catalyses the reaction CTP + AH2 + S-adenosyl-L-methionine = 3'-deoxy-3',4'-didehydro-CTP + 5'-deoxyadenosine + L-methionine + A + H2O + H(+). IRAK1 and TRAF6 synergistically activate RSAD2 increasing its activity with CTP as substrate about 10-fold. In terms of biological role, interferon-inducible antiviral protein which plays a major role in the cell antiviral state induced by type I and type II interferon. Catalyzes the conversion of cytidine triphosphate (CTP) to 3'-deoxy-3',4'-didehydro-CTP (ddhCTP) via a SAM-dependent radical mechanism. In turn, ddhCTP acts as a chain terminator for the RNA-dependent RNA polymerases from multiple viruses and directly inhibits viral replication. Therefore, inhibits a wide range of DNA and RNA viruses, including human cytomegalovirus (HCMV), hepatitis C virus (HCV), west Nile virus (WNV), dengue virus, sindbis virus, influenza A virus, sendai virus, vesicular stomatitis virus (VSV), zika virus, and human immunodeficiency virus (HIV-1). Also promotes TLR7 and TLR9-dependent production of IFN-beta production in plasmacytoid dendritic cells (pDCs) by facilitating 'Lys-63'-linked ubiquitination of IRAK1 by TRAF6. Plays a role in CD4+ T-cells activation and differentiation. Facilitates T-cell receptor (TCR)-mediated GATA3 activation and optimal T-helper 2 (Th2) cytokine production by modulating NFKB1 and JUNB activities. Can inhibit secretion of soluble proteins. The sequence is that of S-adenosylmethionine-dependent nucleotide dehydratase RSAD2 from Homo sapiens (Human).